Here is an 87-residue protein sequence, read N- to C-terminus: Small ribosomal subunit protein bS20 (87 aa).

Residues 1–24 (MANTAQARKRARQSVERNKHNSSL) are disordered.

This sequence belongs to the bacterial ribosomal protein bS20 family.

Its function is as follows. Binds directly to 16S ribosomal RNA. The polypeptide is Small ribosomal subunit protein bS20 (Bordetella petrii (strain ATCC BAA-461 / DSM 12804 / CCUG 43448)).